The primary structure comprises 437 residues: GTPase Obg (437 aa).

The Obg domain occupies 2-160 (SMFLDTAKVS…RQLELELKIL (159 aa)). Residues 161-338 (ADVGLVGFPS…LLEATAELLA (178 aa)) enclose the OBG-type G domain. GTP is bound by residues 167–174 (GFPSVGKS), 192–196 (FTTIV), 214–217 (DLPG), 284–287 (NKMD), and 319–321 (SSL). 2 residues coordinate Mg(2+): Ser174 and Thr194. An OCT domain is found at 359–437 (GFAAEEKAFE…IGKFEFEFVD (79 aa)).

Belongs to the TRAFAC class OBG-HflX-like GTPase superfamily. OBG GTPase family. In terms of assembly, monomer. The cofactor is Mg(2+).

It is found in the cytoplasm. An essential GTPase which binds GTP, GDP and possibly (p)ppGpp with moderate affinity, with high nucleotide exchange rates and a fairly low GTP hydrolysis rate. Plays a role in control of the cell cycle, stress response, ribosome biogenesis and in those bacteria that undergo differentiation, in morphogenesis control. The polypeptide is GTPase Obg (Streptococcus equi subsp. equi (strain 4047)).